Reading from the N-terminus, the 1711-residue chain is MQPQSDKQSASRLATTTSHSTAAASATAATPPKVKVIKSKRPLCHFKFYLDICDHQLAKRIESDIKALGGHLEFFLSDDITHFVTDKPEVIGGTSGTPGTPSTPGTPTSHYQQNDGSARKPNQRQSRADAILSRVRRSTVGVVNSGNSTPTTSLKRSYTIWQTDYAQRFIKRIQTELKQYLEGKKEGGGGSTSASPHHIQLKKQYVKIESVKRNYRPYYHLIKQPDDWPKIDLSSEDGAFRLLTKSKTKDKEHSMTRKPLGSRTSQKDKQAAGEAKPLQHPSLQELKKQSAIPNSPRSNCREPIDSSEKQGGVCEICKLEYDILNIHLQSKDHELFAKNSDNFLALDTLIQSSADVNRFLEEEPVESELDMDVDESLSNEELQSPRQRPSPALREKSKRITKGKHSSEKFQGVAVASPQTPFPGAKKVQGNSPGSLSELQRQEHPTTAAATPTTNSGRRKTQNSGLSPPKRAMLPPSSIYKVVETREECATPPRGRGRPPNQVDSPSLIVKFQKIRQTELQRLNGEAENFMFPRTAVPTTRSSSELPTDVDRQTTSDVRGRYSISSASLDTSTSEAETKESSGLPTSIRKRAQAVGRRRKVGGAAAQDVFQRQLSTGSSSSNSNQQRFPSAPIQPEEGPQPQPKPQLKIKIKQEQLVATRKSSRTATAIVTAATASSHQQQQLRQTTCRKMANKLEDRMGELVKPKIKIKKEVIEEQKVKELEDLEEILDKELDEEVDSSCSSGSDEDYIAGSQRRITAAPRKSTDTREQRAARRLSRLTINRSAGELELTEVKTSPSKSRTKIQKPSSPTKNKVKQTKAVPPAIDLFFDCSKSERLREMQYTFESLPSGELWNRVFLRQDAGEENYYTYYGSTNYRKLPYEMGPIPMAKTLPAHSCALCREASEVKQDKGEQIKLEDQKPAPKKEVKKEEEVQSSSSSATYKNKKLHLLQRYQQEQEQLQQLEGNSLATAGAKCDSKASTPELLEREFASGSMGDRVQLIERVRSTSSSSCSNSQRSGITCRNKQLARIAELPPRKSPREHASTLALVSCIIRQRQDSQSKTNSEAEEPPPPVAAPKLKTPIKQEPVAPSSPRTTRSQAATPVEELRFATEISETVKRMRRGQNKYDHSPPAPVPTPATSSPVRSRRLTPAARNQSQIYSRRLEFATSQRESSASALLGKRKRRVNPSVAGTVRPTTQNLPGTGAYRGVRKLPSKKGLLEYEMETCALKALDQARQYCNPGFVAWQLDKYLELAGKEYDIEFDQISPEVESEGREERLVNTPQTPPPTDCFTSEFDLCDLIMGSAGSGDDDEDVSRGNPPGSGRRMSNLNLYASYYRKRKSLKSNRTGWPKAQRRRNAGGLGGSRALPDERINFQKMGLAELHPIKQEPMETEEEQTTTTTTTTTTSATRGNLLSKDDEDDEGGGNSPSGGSPADDKQNSREDAVMTPPATDVDEQAEPQADEMESLPDEDETMADSVDQQQDVEAEIEATDADVEEEEEEEDEDEDVFEDAYEEQDMGIQKTEPHEKRARIPSISVTTPPEDSSQGKKLLLTLHNGQRLQATSTPSTGQVQQHQRRTPQLNGSLGSCISPSEKLGDNSDIFTVSSDGLDTDLDLSNTQAGDSHEHCPHQTTPKRKFDISKYAPPNSGKAASSCAAEAATAAVKSLAISQFLKKETCASSSSMRNAWRRTQRRAISAACISAAPSARVPN.

3 disordered regions span residues 1–31 (MQPQ…AATP), 87–129 (KPEV…SRAD), and 244–307 (TKSK…IDSS). Residues 1–400 (MQPQSDKQSA…PALREKSKRI (400 aa)) form a sufficient for interaction with and activation of Cdc7 region. Low complexity-rich tracts occupy residues 10–30 (ASRL…TAAT) and 97–109 (TPGT…TPTS). S306 and S307 each carry phosphoserine. The DBF4-type zinc-finger motif lies at 307 to 356 (SEKQGGVCEICKLEYDILNIHLQSKDHELFAKNSDNFLALDTLIQSSADV). The Zn(2+) site is built by C314, C317, H327, and H333. The segment covering 365–378 (VESELDMDVDESLS) has biased composition (acidic residues). 11 disordered regions span residues 365–507 (VESE…DSPS), 531–647 (MFPR…KPQL), 733–771 (LDEE…REQR), 791–817 (TEVK…KVKQ), 908–945 (QDKG…YKNK), 1005–1025 (RSTS…CRNK), 1055–1157 (QRQD…RNQS), 1271–1290 (ESEG…PPTD), 1303–1329 (MGSA…RMSN), 1343–1370 (LKSN…ALPD), and 1383–1644 (LHPI…SKYA). A phosphoserine mark is found at S406, S407, S417, S432, and S435. The span at 429–439 (QGNSPGSLSEL) shows a compositional bias: polar residues. Residues 445 to 454 (PTTAAATPTT) are compositionally biased toward low complexity. At S467 the chain carries Phosphoserine. The segment at residues 493-505 (PRGRGRPPNQVDS) is a DNA-binding region (a.T hook). Residues 537 to 546 (VPTTRSSSEL) show a composition bias toward polar residues. Residues S542, S543, and S544 each carry the phosphoserine modification. Basic and acidic residues predominate over residues 549 to 560 (DVDRQTTSDVRG). Low complexity predominate over residues 563–575 (SISSASLDTSTSE). A compositionally biased stretch (basic residues) spans 588–601 (IRKRAQAVGRRRKV). The span at 793–812 (VKTSPSKSRTKIQKPSSPTK) shows a compositional bias: polar residues. A compositionally biased stretch (basic and acidic residues) spans 908 to 932 (QDKGEQIKLEDQKPAPKKEVKKEEE). The span at 1006–1018 (STSSSSCSNSQRS) shows a compositional bias: low complexity. Phosphothreonine is present on T1081. Residues S1091 and S1092 each carry the phosphoserine modification. A compositionally biased stretch (polar residues) spans 1092-1101 (SPRTTRSQAA). Residues 1398 to 1407 (TTTTTTTTTT) are compositionally biased toward low complexity. A sufficient for interaction with Gcn5 region spans residues 1400 to 1695 (TTTTTTTTSA…NAWRRTQRRA (296 aa)). A compositionally biased stretch (basic and acidic residues) spans 1435 to 1445 (ADDKQNSREDA). Acidic residues-rich tracts occupy residues 1453–1475 (DVDE…DETM) and 1483–1518 (QDVE…EEQD). 2 stretches are compositionally biased toward polar residues: residues 1536 to 1545 (ISVTTPPEDS) and 1556 to 1591 (HNGQ…SCIS).

In terms of assembly, component of the Dbf4-dependent kinase (DDK) complex consisting of Cdc7 and the Dbf4 ortholog chif. Interacts with Cdc7; the interaction is direct. Interacts with CG5790. As to quaternary structure, component of the Chiffon histone acetyltransferase (CHAT) complex consisting of Ada3, Sgf29, Gcn5, chif/chiffon and Ada2b (Isoform A). Interacts (via C-terminus) with Gcn5; the interaction is direct but weak in the absence of other CHAT components. In terms of processing, may be proteolytically cleaved to produce a N-terminal 50 kDa product.

It localises to the nucleus. Its function is as follows. A bicistronic gene producing two proteins that are components of different complexes and have separate properties and functions. Full-length protein is proteolytically cleaved, producing a ~50kDa N-terminal product (Chiffon-A) that forms part of the DDK complex; it is unclear if the C-terminal proteolytic product is stable or functional. Alternative initiation from an internal ribosome entry site produces a C-terminal ~48kDa product (Chiffon-B or Isoform E) that forms part of the CHAT complex. Involved in regulation of gene expression during embryonic development. Functionally, regulatory component of the Dbf4-dependent kinase (DDK) complex. Required for the amplification stage, but not the preceding endoreplication stage of DNA replication in egg chamber follicle cells of the ovary. May be involved in initiation of DNA replication; activation of the chorion gene origins. May have a role in eye and thoracic bristle development. Required for female fertility; is not required for oogenesis but is required maternally for early embryo development. Component of the CHAT histone acetyltransferase complex, which predominantly acetylates histone H3. As part of the CHAT complex involved in acetylation of histone H3 on 'Lys-10' (H3K9ac), 'Lys-15' (H3K14ac) and 'Lys-19' (H3K18ac), but not 'Lys-25' (H3K24ac). May also regulate other histone acetyltransferase complexes. Essential for viability. Not required for early stages of embryonic development. May be involved in zygotic genome activation during embryogenesis. The polypeptide is Protein chiffon (Drosophila melanogaster (Fruit fly)).